The chain runs to 502 residues: UDP-N-acetylglucosamine diphosphorylase 2 (502 aa).

The Substrate binding signature appears at 130–133 (LSGG). Asparagine 250 contacts substrate. The short motif at 332–333 (EY) is the Substrate binding element. Lysine 429 serves as a coordination point for substrate.

It belongs to the UDPGP type 1 family. Monomer. Mg(2+) is required as a cofactor. Requires Mn(2+) as cofactor. In terms of tissue distribution, expressed in root tips, stipules, lateral root primordia, immature anthers and at the branching points of the flowering shoots.

Its subcellular location is the cytoplasm. The catalysed reaction is N-acetyl-alpha-D-glucosamine 1-phosphate + UTP + H(+) = UDP-N-acetyl-alpha-D-glucosamine + diphosphate. It carries out the reaction N-acetyl-alpha-D-galactosamine 1-phosphate + UTP + H(+) = UDP-N-acetyl-alpha-D-galactosamine + diphosphate. The enzyme catalyses alpha-D-glucose 1-phosphate + UTP + H(+) = UDP-alpha-D-glucose + diphosphate. It functions in the pathway nucleotide-sugar biosynthesis; UDP-N-acetyl-alpha-D-glucosamine biosynthesis; UDP-N-acetyl-alpha-D-glucosamine from N-acetyl-alpha-D-glucosamine 1-phosphate: step 1/1. In terms of biological role, uridylyltransferase involved in the biosynthesis of UDP-glucosamine, an essential precursor for glycoprotein and glycolipid synthesis. Can use UDP-glucosamine, the 4-epimer UDP-galactosamine and UDP-glucose as substrates. Acts redundantly with GLCNAC1PUT1. Required for gametogenesis and embryo development. The sequence is that of UDP-N-acetylglucosamine diphosphorylase 2 (GLCNAC1PUT2) from Arabidopsis thaliana (Mouse-ear cress).